The sequence spans 579 residues: Type II restriction enzyme FokI (579 aa).

Catalysis depends on residues D450, D467, and K469.

In terms of assembly, monomer, in which form it can cleave DNA. Homodimer when bound to DNA. The cofactor is Mg(2+).

The catalysed reaction is Endonucleolytic cleavage of DNA to give specific double-stranded fragments with terminal 5'-phosphates.. In terms of biological role, an S subtype restriction enzyme that recognizes the asymmetric double-stranded sequence 5'-GGATG-3' and cleaves respectively 14 bases after G-1 (top strand) and 13 bases before C-1 (bottom strand). This is Type II restriction enzyme FokI from Planomicrobium okeanokoites (Planococcus okeanokoites).